The sequence spans 233 residues: uncharacterized protein (233 aa).

7 residues coordinate Zn(2+): His64, His66, Asp68, His69, His143, Asp162, and His212.

This sequence belongs to the metallo-beta-lactamase superfamily. Glyoxalase II family. Zn(2+) serves as cofactor.

This is an uncharacterized protein from Bacillus subtilis (strain 168).